We begin with the raw amino-acid sequence, 116 residues long: MVKKSEFERGDIVLVGFDPASGHEQQGAGRPALVLSVQAFNQLGMTLVAPITQGGNFARYAGFSVPLHCEEGDVHGVVLVNQVRMMDLHARLAKRIGLAADEVVEEALLRLQAVVE.

This sequence belongs to the PemK/MazF family. As to quaternary structure, homodimer, interacts with ChpS, which inhibits the endoribonuclease activity.

With respect to regulation, stimulated in vitro in a concentration-dependent fashion by extracellular death factor (EDF, a quorum sensing pentapeptide sequence NNWNN, probably produced from the zwf gene product glucose-6-phosphate 1-dehydrogenase), which is able to overcome inhibition by cognate antitoxin ChpS. Toxic component of a type II toxin-antitoxin (TA) system. ChpB is a sequence-specific mRNA and (weak) tmRNA endoribonuclease that inhibits protein synthesis and induces bacterial stasis. Cleavage is independent of the ribosome. Cleavage occurs at ACY sequences where Y is not C. The endoribonuclease activity is not as strong as that of MazF. The endoribonuclease activity (a toxin) is inhibited by its labile cognate antitoxin ChpS. Toxicity results when the levels of ChpS decrease in the cell, leading to mRNA degradation. Both ChpS and ChpB probably bind to the promoter region of the chpS-chpB operon to autoregulate their synthesis. This chain is Endoribonuclease toxin ChpB (chpB), found in Escherichia coli (strain K12).